The chain runs to 251 residues: uncharacterized protein (251 aa).

Belongs to the FAM243 family.

This is an uncharacterized protein from Mus musculus (Mouse).